We begin with the raw amino-acid sequence, 216 residues long: Probable nicotinate-nucleotide adenylyltransferase (216 aa).

It belongs to the NadD family.

The catalysed reaction is nicotinate beta-D-ribonucleotide + ATP + H(+) = deamido-NAD(+) + diphosphate. The protein operates within cofactor biosynthesis; NAD(+) biosynthesis; deamido-NAD(+) from nicotinate D-ribonucleotide: step 1/1. Catalyzes the reversible adenylation of nicotinate mononucleotide (NaMN) to nicotinic acid adenine dinucleotide (NaAD). The sequence is that of Probable nicotinate-nucleotide adenylyltransferase from Shewanella pealeana (strain ATCC 700345 / ANG-SQ1).